The following is a 387-amino-acid chain: F-box protein DOR (387 aa).

Positions Asp-19–Leu-64 constitute an F-box domain.

Part of a SCF (ASK-cullin-F-box) protein ligase complex. Interacts with ASK14 and CUL1. As to expression, strongly expressed in guard cells. Mostly represented in seedlings, leaves and flowers, and, to a lower extent, in roots and siliques.

It functions in the pathway protein modification; protein ubiquitination. Component of SCF(ASK-cullin-F-box) E3 ubiquitin ligase complexes, which may mediate the ubiquitination and subsequent proteasomal degradation of target proteins. Negative regulator of guard cell abscisic acid (ABA) signaling, especially during drought stress. The polypeptide is F-box protein DOR (DOR) (Arabidopsis thaliana (Mouse-ear cress)).